We begin with the raw amino-acid sequence, 288 residues long: Xyloglucan endotransglucosylase protein 8 (288 aa).

Residues 1–25 form the signal peptide; it reads MAASPYSIFAVQLLLLASWMLSSSS. The GH16 domain occupies 26 to 215; sequence SNFNQDFNIA…WTQAPFTTSY (190 aa). E102 (nucleophile) is an active-site residue. The active-site Proton donor is the E106. E106 lines the xyloglucan pocket. N-linked (GlcNAc...) asparagine glycosylation is present at N110. Residues 119–121, 129–131, 194–195, and G199 each bind xyloglucan; these read HTN, ERE, and EW. 2 disulfides stabilise this stretch: C224/C233 and C268/C282. R273 contributes to the xyloglucan binding site.

The protein belongs to the glycosyl hydrolase 16 family. XTH group 2 subfamily. In terms of processing, contains at least one intrachain disulfide bond essential for its enzymatic activity. Highly expressed in mature fruits. Very low expression in leaves, flowers, calyces and stems.

It localises to the secreted. The protein resides in the cell wall. It is found in the extracellular space. The protein localises to the apoplast. The enzyme catalyses breaks a beta-(1-&gt;4) bond in the backbone of a xyloglucan and transfers the xyloglucanyl segment on to O-4 of the non-reducing terminal glucose residue of an acceptor, which can be a xyloglucan or an oligosaccharide of xyloglucan.. Its function is as follows. Catalyzes xyloglucan endotransglycosylation (XET). Cleaves and religates xyloglucan polymers. Does not catalyze xyloglucan endohydrolysis (XEH). Overexpression in Arabidopsis transgenic plants causes accelerated dark-induced leaf senescence and higher lipid peroxidation of the leaf cells. Overexpression in transgenic tomato plants promotes fruit ripening and softening. Probably involved in cell wall restructuring during postharvest fruit softening. The protein is Xyloglucan endotransglucosylase protein 8 of Diospyros kaki (Kaki persimmon).